Here is an 809-residue protein sequence, read N- to C-terminus: MGKRKLGVIASAFVAGALVCGSTLVNAEPVMTGGPVQGKALWTDYSGMSKEVQGPVSQILFTQSPRTAKGDPYQNYPHYIPEGSRIVLFDLNTKELKVLTNDFATAFDPCTYWDGKKFAFAGVHKKGGGCQIWEMNIDGSGLRQMTDLKGTCRSPIYYAAGSIEEGEGRIIWRDRYFEGDWKEHGMVEKTGMIIFSGSPEGVMDEFHNPYAYNLYRLDTQGGKIIQRITGHVLSGIEFPHLNTTIDQITYNLSSNFDPWLTPDGNILFSSVQANGSRAGGEGRVMICVDNWDGAYPRPIYGNCDGEIGGTSGRSQAKITFGDRKIVYVESPYMNWGVGQLAAVSWDAPFNKTYEKLTGKDGGLYRSPYPLPDDRMLVSYAERGDFGIYWFNFSKCAAGDKVYDDPNWNDHQPAPVYVKYKPRWINTFTAGKNFGVTVVTYQPFDQVKVEGYPHSWGTWICFDTTLSDQPVGPYPHQKAKNVSHGDIKAVRIIQGYQCVEPDSTRFRVGAGAHLLGGERSSSNSGTAFQQRGIIGYQYVESDGSTVTSQLSDVPYYMQILDDKGMSVQTALTWAYLRPYHGRICSGCHYGSYRGRAFKNIHAKALYNWWYDDRSHYDSPFAFRYLKFDNDGNYKGVKHGEDVVVPSDIYYGGPSGTTSQPVEGLTLDKQRTVDFRRDIQPILDAKCAMCHDSNNPPNLGGGLELVSVDGIAAYSRAYNSLLEPQRGKDPNIGGKYVNPSAAINSLLVWRLYEAELSANAPREKIFPIEGRLLHNKFLTQDERYAIVEWIDLGAQWDNIPGPDFYPGYLVK.

An N-terminal signal peptide occupies residues 1–27 (MGKRKLGVIASAFVAGALVCGSTLVNA). A Zn(2+)-binding site is contributed by cysteine 303. 2 residues coordinate heme: cysteine 583 and cysteine 586. Position 587 (histidine 587) interacts with Zn(2+). Residues tyrosine 591, cysteine 685, cysteine 688, histidine 689, and histidine 772 each coordinate heme. The region spanning 633-792 (KGVKHGEDVV…AIVEWIDLGA (160 aa)) is the Cytochrome c domain.

In terms of assembly, part of the hydrazine synthase complex that forms an elongated dimer of heterotrimers composed of one alpha, one beta and one gamma subunit. Heme c serves as cofactor.

The protein resides in the anammoxosome. It carries out the reaction hydrazine + 3 Fe(III)-[cytochrome c] + H2O = nitric oxide + 3 Fe(II)-[cytochrome c] + NH4(+) + 2 H(+). It functions in the pathway nitrogen metabolism. Its function is as follows. Component of the hydrazine synthase complex that catalyzes the condensation of nitric oxide (NO) with ammonium to form hydrazine. The alpha subunit catalyzes the second half-reaction, i.e. the condensation of hydroxylamine formed in the active site of the gamma subunit with ammonia, yielding hydrazine. Is involved in anaerobic ammonium oxidation (anammox), a biological process in which nitrite is used as the electron acceptor in the conversion of ammonium to dinitrogen gas (N2) and water; this bacterial process has a major role in the Earth's nitrogen cycle and has been estimated to synthesize up to 50% of the dinitrogen gas emitted into our atmosphere from the oceans. This is Hydrazine synthase subunit alpha from Kuenenia stuttgartiensis.